A 138-amino-acid polypeptide reads, in one-letter code: Holo-[acyl-carrier-protein] synthase (138 aa).

Aspartate 8 and glutamate 57 together coordinate Mg(2+).

Belongs to the P-Pant transferase superfamily. AcpS family. Mg(2+) is required as a cofactor.

Its subcellular location is the cytoplasm. The catalysed reaction is apo-[ACP] + CoA = holo-[ACP] + adenosine 3',5'-bisphosphate + H(+). In terms of biological role, transfers the 4'-phosphopantetheine moiety from coenzyme A to a Ser of acyl-carrier-protein. The polypeptide is Holo-[acyl-carrier-protein] synthase (Phenylobacterium zucineum (strain HLK1)).